The sequence spans 244 residues: uncharacterized protein (244 aa).

6 helical membrane passes run 22 to 42 (IMLQ…LLSF), 63 to 83 (FIFS…WGLT), 110 to 130 (VILL…EAFA), 140 to 160 (IMSL…NLTV), 186 to 206 (GVLF…IFQL), and 213 to 233 (AVFD…MLVV).

The protein resides in the cell membrane. This is an uncharacterized protein from Haemophilus influenzae (strain ATCC 51907 / DSM 11121 / KW20 / Rd).